The primary structure comprises 185 residues: Ethylene-responsive transcription factor ERF017 (185 aa).

Positions 11-68 (KYKGVRKRKWGKWVSEIRLPNSRERIWLGSYDTPEKAARAFDAALYCLRGNNAKFNFP) form a DNA-binding region, AP2/ERF.

This sequence belongs to the AP2/ERF transcription factor family. ERF subfamily.

It is found in the nucleus. Probably acts as a transcriptional activator. Binds to the GCC-box pathogenesis-related promoter element. May be involved in the regulation of gene expression by stress factors and by components of stress signal transduction pathways. In Arabidopsis thaliana (Mouse-ear cress), this protein is Ethylene-responsive transcription factor ERF017 (ERF017).